Reading from the N-terminus, the 185-residue chain is Stathmin-4 (185 aa).

One can recognise an SLD domain in the interval 48–185; it reads SDMEVIELNK…EVRKNKEATR (138 aa). Residues 90 to 185 adopt a coiled-coil conformation; it reads SLEEIQKKLE…EVRKNKEATR (96 aa). The tract at residues 165–185 is disordered; that stretch reads ERLQEKDKHAEEVRKNKEATR. Over residues 166–185 the composition is skewed to basic and acidic residues; that stretch reads RLQEKDKHAEEVRKNKEATR.

It belongs to the stathmin family. Nervous tissue.

This is Stathmin-4 (stmn4) from Xenopus laevis (African clawed frog).